Reading from the N-terminus, the 264-residue chain is Apolipoprotein A-I (264 aa).

A signal peptide spans 1–18 (MKAVVLAVAVLFLTGSQA). 2 tandem repeats follow at residues 67–88 (LKLV…EQLG) and 89–110 (PVTQ…EEMN). The segment at 67 to 264 (LKLVDNWDTV…DETSKRLSTQ (198 aa)) is 10 X approximate tandem repeats. At Met-109 the chain carries Methionine sulfoxide. The 3; half-length repeat unit spans residues 111–121 (KDLEEVKKQVQ). 3 consecutive repeat copies span residues 122–143 (PYLD…QKVG), 144–165 (PLGA…ERLV), and 166–187 (PVGE…SNLS). The 7; truncated repeat unit spans residues 188–207 (PYSDKMRERLAQHLAKLKDS). Met-193 is modified (methionine sulfoxide). The stretch at 208 to 229 (TTLAEYRTKASNHLQTLSEKAK) is repeat 8. The stretch at 230–240 (PALEDLRQGLT) is one 9; half-length repeat. Copy 10 of the repeat occupies 241-264 (PMLESFRATIMGWIDETSKRLSTQ). Met-242 carries the post-translational modification Methionine sulfoxide.

Belongs to the apolipoprotein A1/A4/E family. As to quaternary structure, homodimer. Interacts with APOA1BP and CLU. Component of a sperm activating protein complex (SPAP), consisting of APOA1, an immunoglobulin heavy chain, an immunoglobulin light chain and albumin. Interacts with NDRG1. Interacts with SCGB3A2. Interacts with NAXE and YJEFN3. Post-translationally, glycosylated. In terms of processing, palmitoylated. Phosphorylation sites are present in the extracellular medium.

Its subcellular location is the secreted. Functionally, participates in the reverse transport of cholesterol from tissues to the liver for excretion by promoting cholesterol efflux from tissues and by acting as a cofactor for the lecithin cholesterol acyltransferase (LCAT). As part of the SPAP complex, activates spermatozoa motility. This is Apolipoprotein A-I (Apoa1) from Peromyscus maniculatus bairdii (Prairie deer mouse).